Consider the following 537-residue polypeptide: Tegument protein BRRF2 (537 aa).

2 disordered regions span residues 322–466 (PRFL…AEEF) and 486–537 (GLRV…LSVV). Over residues 334–347 (EPQQTCSQLTSRGN) the composition is skewed to polar residues. Positions 420–441 (VTGSSQAAPSSSSVTPVASLSG) are enriched in low complexity. Residues 492–517 (DEDEDGSEDGEFSDLDLSDSDHEGDE) show a composition bias toward acidic residues.

The protein belongs to the lymphocryptovirus BRRF2 family.

The protein localises to the virion tegument. The protein is Tegument protein BRRF2 of Homo sapiens (Human).